The sequence spans 308 residues: UPF0282 protein SSO3251 (308 aa).

Belongs to the UPF0282 family.

The protein is UPF0282 protein SSO3251 of Saccharolobus solfataricus (strain ATCC 35092 / DSM 1617 / JCM 11322 / P2) (Sulfolobus solfataricus).